Here is a 460-residue protein sequence, read N- to C-terminus: A-type ATP synthase subunit B (460 aa).

This sequence belongs to the ATPase alpha/beta chains family. Has multiple subunits with at least A(3), B(3), C, D, E, F, H, I and proteolipid K(x).

The protein resides in the cell membrane. Functionally, component of the A-type ATP synthase that produces ATP from ADP in the presence of a proton gradient across the membrane. The B chain is a regulatory subunit. This chain is A-type ATP synthase subunit B, found in Thermoplasma acidophilum (strain ATCC 25905 / DSM 1728 / JCM 9062 / NBRC 15155 / AMRC-C165).